Reading from the N-terminus, the 368-residue chain is Saccharopine dehydrogenase [NAD(+), L-lysine-forming] (368 aa).

L-saccharopine-binding residues include R18 and K77. K77 (proton acceptor) is an active-site residue. S85 is modified (phosphoserine). The active-site Proton donor is the H96. Position 101 (Q101) interacts with L-saccharopine. An NAD(+)-binding site is contributed by R130. Residues R131 and F135 each contribute to the L-saccharopine site. Residues G203–R204, D227, T231, Y251, and V278 each bind NAD(+). Residues C205 and C249 are joined by a disulfide bond. S279–D281 is an L-saccharopine binding site. I319–L322 is an NAD(+) binding site.

The protein belongs to the AlaDH/PNT family. In terms of assembly, monomer.

It carries out the reaction L-saccharopine + NAD(+) + H2O = L-lysine + 2-oxoglutarate + NADH + H(+). The protein operates within amino-acid biosynthesis; L-lysine biosynthesis via AAA pathway; L-lysine from L-alpha-aminoadipate (fungal route): step 3/3. Its function is as follows. Catalyzes the NAD(+)-dependent cleavage of saccharopine to L-lysine and 2-oxoglutarate, the final step in the alpha-aminoadipate (AAA) pathway for lysin biosynthesis. This Schizosaccharomyces pombe (strain 972 / ATCC 24843) (Fission yeast) protein is Saccharopine dehydrogenase [NAD(+), L-lysine-forming].